The sequence spans 142 residues: Putative pre-16S rRNA nuclease (142 aa).

The protein belongs to the YqgF nuclease family.

It localises to the cytoplasm. In terms of biological role, could be a nuclease involved in processing of the 5'-end of pre-16S rRNA. This is Putative pre-16S rRNA nuclease from Lactobacillus delbrueckii subsp. bulgaricus (strain ATCC 11842 / DSM 20081 / BCRC 10696 / JCM 1002 / NBRC 13953 / NCIMB 11778 / NCTC 12712 / WDCM 00102 / Lb 14).